Reading from the N-terminus, the 580-residue chain is Nuclear body protein SP140-like protein (580 aa).

The region spanning 33–149 (SLQRLFTEDQ…IYKSFKNAIQ (117 aa)) is the HSR domain. Residues 155–293 (QESDRKEREE…RSRASRKHKD (139 aa)) form a disordered region. A compositionally biased stretch (basic and acidic residues) spans 156 to 170 (ESDRKEREERPDIKL). Lys-169 is covalently cross-linked (Glycyl lysine isopeptide (Lys-Gly) (interchain with G-Cter in SUMO2)). Ser-180 is modified (phosphoserine). A compositionally biased stretch (basic residues) spans 207–219 (KPKRKRRKKKGHG). A compositionally biased stretch (polar residues) spans 224-236 (GTRTQKNNQQNDN). Over residues 280–290 (QKRVRSRASRK) the composition is skewed to basic residues. Residue Lys-292 forms a Glycyl lysine isopeptide (Lys-Gly) (interchain with G-Cter in SUMO2) linkage. In terms of domain architecture, SAND spans 293 to 374 (DETVDFQAPL…RRLMEEGSLP (82 aa)). Residues 403–449 (LDECEVCRDGGELFCCDTCSRVFHEDCHIPPVESEKTPWNCIFCRMK) form a PHD-type zinc finger. The Bromo domain maps to 467–570 (QMCPEEQLKC…AEFEKDFKEV (104 aa)).

The protein is Nuclear body protein SP140-like protein (SP140L) of Homo sapiens (Human).